Consider the following 563-residue polypeptide: Inositol-3-phosphate synthase 1-A (563 aa).

The protein belongs to the myo-inositol 1-phosphate synthase family. Requires NAD(+) as cofactor.

It is found in the cytoplasm. The catalysed reaction is D-glucose 6-phosphate = 1D-myo-inositol 3-phosphate. It functions in the pathway polyol metabolism; myo-inositol biosynthesis; myo-inositol from D-glucose 6-phosphate: step 1/2. Its function is as follows. Key enzyme in myo-inositol biosynthesis pathway that catalyzes the conversion of glucose 6-phosphate to 1-myo-inositol 1-phosphate in a NAD-dependent manner. Rate-limiting enzyme in the synthesis of all inositol-containing compounds. In Xenopus laevis (African clawed frog), this protein is Inositol-3-phosphate synthase 1-A (isyna1-a).